A 314-amino-acid polypeptide reads, in one-letter code: uncharacterized protein (314 aa).

The first 24 residues, 1–24, serve as a signal peptide directing secretion; sequence MKRRRRWRGWLLFPALCFCLLCEA. 14 N-linked (GlcNAc...) asparagine; by host glycosylation sites follow: Asn28, Asn43, Asn57, Asn77, Asn101, Asn102, Asn109, Asn151, Asn170, Asn217, Asn223, Asn252, Asn255, and Asn268. Positions 47-114 are enriched in low complexity; sequence ATTGTTTTSP…TIGTNATSPS (68 aa). The segment at 47 to 116 is disordered; sequence ATTGTTTTSP…GTNATSPSPS (70 aa).

This sequence belongs to the HHV-5 UL116 protein family. In terms of assembly, interacts with gH. Interacts with UL148. Highly glycosylated.

The protein resides in the virion. Its subcellular location is the host endoplasmic reticulum. Chaperone protein that cooperates with UL148 to regulate the abundance of gH complexes in virion. First interactor of gH in the host endoplasmic reticulum, regulates the early folding steps of virion assembly. Then, UL148 is recruited and favors the binding of gL. This is an uncharacterized protein from Homo sapiens (Human).